The following is a 449-amino-acid chain: MPKNKKRNAPHRGGGGGGGSGAATSAATTGGPHRTVQPFSDEDASIETMSHCSGYSDPSSFAEDGPEVLDEEGTQEDLEYKLKGLIDLTLDKSAKTRQAALEGVKNALSSKVLYEFVLERRMTLTDSIERCLKKGKSDGQRAAAALASVLCIQLGPGLESEEILKTLGPILKKIICDGTASIQARQTCATCFGVCCFIATDDITELYSTLECLEGIFTKSYLKEKDTNVPCSTPNTVLHISSLLAWTLLLTICPISEVKKKLELHFHKLPSLLSCDDVNMRIAAGESLALLFELARGMESDFFYEDMDSLTQMLRALATDGNKHRAKVDKRKQRSVFRDVLRAVEERDFPTETVKFGPERMYIDSWVKKHTYDTFKEALGSGMQYHLQTNEFLRNVFELGPPVMLDAATLKTMKIPRFERHLYNSAAFKARTKARSKCRDKRADVGEFF.

Residues 1–10 (MPKNKKRNAP) are compositionally biased toward basic residues. Residues 1–41 (MPKNKKRNAPHRGGGGGGGSGAATSAATTGGPHRTVQPFSD) form a disordered region. A compositionally biased stretch (gly residues) spans 12 to 21 (RGGGGGGGSG). Over residues 22–31 (AATSAATTGG) the composition is skewed to low complexity.

The protein belongs to the IFRD family. Interacts with PSIP1/LEDGF. As to expression, expressed at high levels in the embryonic brain in the period related to neuroblast proliferation and differentiation.

It is found in the cytoplasm. The protein resides in the cell membrane. The protein localises to the nucleus. Probably participates in neurogenesis. Could play a role in regulating gene activity in the proliferative and/or differentiative pathways induced by NGF. In Rattus norvegicus (Rat), this protein is Interferon-related developmental regulator 1 (Ifrd1).